The primary structure comprises 1187 residues: MIDDLIYFSNDAVTSTVLLNVGQEVIAVVEENKVSNGLKAIRVEAVSDKWEDDSKNSSKGLSDSSPRVLIGCVTSMLEGAGYISQTTYFSLESVCEGFHPCKGDWVEAEYWIRPGTWSSEAISVKPLRYKRVDKVCISSLCGRNGVIEDSIFFSLDSLKLPEGYIPRRHDIVNAVVVESSQSCYIWRALCMTPVKRDATLGEAPQEPYGALLLKNKGDIEVTRMTSFGTLKEGESKSIVIWIENKGKFSRELVSCRLANWDKAHQFRFETQGRSKSCPGAAAGSVPEGENVNSLNHHREDKTDEIPESRLANSTEISPDGCACKEESREKGNTPEKQEPEPGGLIPPGEKTHIVVTCSAKNPGRCKELLLLCFSDFLIGRHLEVSVVSSEEALIAVREPFSWKKPKSSQTLVSAKTTVVVTTQKRNSRRQLPSFLPQYPIPDRLKKCVEQKIDILTFQPLLAELLNMSNYKEKFSTLLWLEEIHAEIELKEYNMSRVVLKRKGDLLVLEVPGLAESRPSLYAGDKLILKSQEYNGHVIEYIGYVMEIHEEDVTLKLNPGFEQMYNFEPMDVEFTYNRTTSRRCHYALEQVIHLGVKVLFPEEIILQSPQVTGNWSLAQDTKNDGQSITNITRNDGQSMTKVTRNDSQSITNIIRNDGQSITNVTRNDGQPITKVTRNNSQSITNITRNDGQPITKNKKTVKDQTKHTTEERHVGTTDQPEKASSTAETMDEIQIPKARDKEFFNPVLNENQKLAVRRILSGDCRPLPYILFGPPGTGKTVTIIEAVLQVHYALPDSRILVCAPSNSAADLVCLRLHESKVPKPAAMVRVNATCRFEETIIDAIKPYCRDGEDIWRASRFRIIITTCSSAGLFYQIGVRVGYFTHVFVDEAGQASEPECLIPLGLISDINGQIVLAGDPMQLGPVIKSRLAMAYGLNVSMLERLMSRPAYLRDENAFGACGAYNPLLVTKLVKNYRSHSALLALPSRLFYHRELEVCADPKVVTSLLGWEKLPRKGFPLIFHGVRGNEAREGRSPSWFSPAEAVQVMRYCCLLARSVSSQVSSKDIGVITPYRKQVEKIKILLRNVDLTDIKVGSVEEFQGQEYLVIVISTVRSNEDRFEDDRYFLGFLSNSKRFNVAITRPKALLIILGNPHVLVRDPCFGALLEYSVSNGVYTGCDLPPELQALQK.

Residues 273-347 form a disordered region; the sequence is RSKSCPGAAA…EPEPGGLIPP (75 aa). Composition is skewed to basic and acidic residues over residues 296–307 and 322–339; these read HHREDKTDEIPE and ACKEESREKGNTPEKQEP. Repeat copies occupy residues 642–652, 653–663, 664–674, 675–685, and 686–696. The interval 642–696 is 5 X 11 AA tandem repeats of [TI]-R-N-[DN]-[GS]-Q-[SP]-I-T-[NK]-[IVN]; it reads TRNDSQSITNIIRNDGQSITNVTRNDGQPITKVTRNNSQSITNITRNDGQPITKN. The interval 686 to 727 is disordered; sequence TRNDGQPITKNKKTVKDQTKHTTEERHVGTTDQPEKASSTAE. Positions 699–720 are enriched in basic and acidic residues; the sequence is TVKDQTKHTTEERHVGTTDQPE. 772–779 contacts ATP; it reads GPPGTGKT. The DEAG box motif lies at 888–891; the sequence is DEAG.

This sequence belongs to the DNA2/NAM7 helicase family. SDE3 subfamily. In terms of assembly, interacts with PIWIL1. Interacts with PIWIL2. Interacts with PIWIL4. Interacts with HSPA2. Interacts with PLD6. In terms of tissue distribution, isoform 1: Specifically expressed in testis. Isoform 1: In testis, present in pachytene spermatocytes but absent in postmeiotic spermatids (at protein level). Isoform 2: Present in cardiomyocytes (at protein level). Isoform 2: Heart specific. Isoform 3: Heart specific and is specifically expressed in cardiac myocytes.

It is found in the cytoplasm. It carries out the reaction ATP + H2O = ADP + phosphate + H(+). In terms of biological role, ATP-dependent RNA helicase required during spermatogenesis to repress transposable elements and prevent their mobilization, which is essential for germline integrity. Acts via the piRNA metabolic process, which mediates the repression of transposable elements during meiosis by forming complexes composed of piRNAs and Piwi proteins and governs the methylation and subsequent repression of transposons. Involved in the primary piRNA metabolic process. Specifically binds to piRNA precursors and promotes the generation of intermediate piRNA processing fragments that are subsequently loaded to Piwi proteins. Acts via its ATP-dependent RNA helicase activity: displays 5'-3' RNA unwinding activity and probably mediates unwinding and funneling of single-stranded piRNA precursor transcripts to the endonuclease that catalyzes the first cleavage step of piRNA processing to generate piRNA intermediate fragments that are subsequently loaded to Piwi proteins. Functionally, may act downstream of MEF2C during heart formation. Acts as a cardiac-specific suppressor of cardiomyocyte hypertrophy and cell cycle progression, suggesting that it may suppress these processes through the regulation of CDKN1A. Such results however require additional evidence. In Mus musculus (Mouse), this protein is RNA helicase Mov10l1.